The chain runs to 670 residues: ATP synthase subunit alpha 2 (670 aa).

180 to 187 provides a ligand contact to ATP; sequence GDRATGKT. Residues 525–670 are disordered; sequence MPAEDAAGDI…DAEAEARHKR (146 aa). Over residues 543-588 the composition is skewed to basic and acidic residues; it reads ARGDADRDADHGANREVSREVSPEASREVSREVSREVSHEADRDAA. Residues 589–599 show a composition bias toward low complexity; the sequence is ADAARVAGRAP. The span at 621 to 639 shows a compositional bias: basic and acidic residues; that stretch reads ADGDRASASRPPPDARGDA. Over residues 650–661 the composition is skewed to low complexity; that stretch reads ADANVNADANVD.

The protein belongs to the ATPase alpha/beta chains family. F-type ATPases have 2 components, CF(1) - the catalytic core - and CF(0) - the membrane proton channel. CF(1) has five subunits: alpha(3), beta(3), gamma(1), delta(1), epsilon(1). CF(0) has three main subunits: a(1), b(2) and c(9-12). The alpha and beta chains form an alternating ring which encloses part of the gamma chain. CF(1) is attached to CF(0) by a central stalk formed by the gamma and epsilon chains, while a peripheral stalk is formed by the delta and b chains.

Its subcellular location is the cell inner membrane. The enzyme catalyses ATP + H2O + 4 H(+)(in) = ADP + phosphate + 5 H(+)(out). Its function is as follows. Produces ATP from ADP in the presence of a proton gradient across the membrane. The alpha chain is a regulatory subunit. This chain is ATP synthase subunit alpha 2, found in Burkholderia mallei (strain NCTC 10247).